The sequence spans 200 residues: Coiled-coil domain-containing protein 28B (200 aa).

N-acetylmethionine is present on Met-1. The span at 1–10 (MDDKKKKRSP) shows a compositional bias: basic residues. The tract at residues 1 to 49 (MDDKKKKRSPKPCLAQPAQAPGTLRRVPVPTSHSGSLALGLPHLPSPKQ) is disordered. Phosphoserine is present on residues Ser-46 and Ser-115. Positions 141-152 (EEEDDEEEEDGV) are enriched in acidic residues. Residues 141 to 164 (EEEDDEEEEDGVTEGLPEEQKKTM) form a disordered region. Positions 158–183 (EEQKKTMADRNLDQLLSNLEDLSNSI) form a coiled coil.

As to quaternary structure, interacts with BBS1, BBS2, BBS4, BBS5, BBS6, BBS7 and TTC8/BBS8. Interacts with MAPKAP1/SIN1 isoform 1 and RICTOR.

The protein localises to the cytoplasm. The protein resides in the cytoskeleton. It is found in the microtubule organizing center. Its subcellular location is the centrosome. Its function is as follows. Involved in ciliogenesis. Regulates cilia length through its interaction with MAPKAP1/SIN1 but independently of mTORC2 complex. Modulates mTORC2 complex assembly and function, possibly enhances AKT1 phosphorylation. Does not seem to modulate assembly and function of mTORC1 complex. The protein is Coiled-coil domain-containing protein 28B (CCDC28B) of Homo sapiens (Human).